The chain runs to 403 residues: Keratin, type I cytoskeletal 19 (403 aa).

Residues 1 to 82 are head; it reads MTSYSYRQTS…AVSDGLLSGN (82 aa). Residue Arg-7 is modified to Omega-N-methylarginine. Phosphoserine is present on residues Ser-14 and Ser-22. Residue Arg-24 is modified to Asymmetric dimethylarginine; alternate. Position 24 is an omega-N-methylarginine; alternate (Arg-24). At Ser-27 the chain carries Phosphoserine. Arg-32 carries the omega-N-methylarginine modification. Residues Ser-35 and Ser-40 each carry the phosphoserine modification. An omega-N-methylarginine mark is found at Arg-43 and Arg-51. Residue Ser-57 is modified to Phosphoserine. Arg-64 is modified (omega-N-methylarginine). Phosphoserine occurs at positions 67 and 75. The segment at 83 to 118 is coil 1A; it reads EKITMQNLNDRLASYLDKVRALEQANGELEVKIRDW. One can recognise an IF rod domain in the interval 83–394; the sequence is EKITMQNLND…SLLEGQEAHY (312 aa). A linker 1 region spans residues 119–136; the sequence is YQKQGPGPSRDYNHYFKT. Positions 137–228 are coil 1B; sequence IEDLRDKILG…KNHEEEITAL (92 aa). Positions 229 to 251 are linker 12; sequence RSQVGGQVSVEVDSTPGVDLAKI. The interval 247-393 is necessary for interaction with PNN; sequence DLAKILSEMR…RSLLEGQEAH (147 aa). The interval 252–390 is coil 2; the sequence is LSEMRSQYEI…ATYRSLLEGQ (139 aa). Thr-326 bears the Phosphothreonine mark. The rod-like helical tail stretch occupies residues 391–403; it reads EAHYNNLPTPKAI. Position 394 is a phosphotyrosine (Tyr-394).

The protein belongs to the intermediate filament family. As to quaternary structure, heterotetramer of two type I and two type II keratins. Interacts with PNN and the actin-binding domain of DMD.

In terms of biological role, involved in the organization of myofibers. Together with KRT8, helps to link the contractile apparatus to dystrophin at the costameres of striated muscle. The polypeptide is Keratin, type I cytoskeletal 19 (Krt19) (Mus musculus (Mouse)).